The chain runs to 509 residues: Aspartyl/glutamyl-tRNA(Asn/Gln) amidotransferase subunit B (509 aa).

This sequence belongs to the GatB/GatE family. GatB subfamily. As to quaternary structure, heterotrimer of A, B and C subunits.

The catalysed reaction is L-glutamyl-tRNA(Gln) + L-glutamine + ATP + H2O = L-glutaminyl-tRNA(Gln) + L-glutamate + ADP + phosphate + H(+). It catalyses the reaction L-aspartyl-tRNA(Asn) + L-glutamine + ATP + H2O = L-asparaginyl-tRNA(Asn) + L-glutamate + ADP + phosphate + 2 H(+). Its function is as follows. Allows the formation of correctly charged Asn-tRNA(Asn) or Gln-tRNA(Gln) through the transamidation of misacylated Asp-tRNA(Asn) or Glu-tRNA(Gln) in organisms which lack either or both of asparaginyl-tRNA or glutaminyl-tRNA synthetases. The reaction takes place in the presence of glutamine and ATP through an activated phospho-Asp-tRNA(Asn) or phospho-Glu-tRNA(Gln). The chain is Aspartyl/glutamyl-tRNA(Asn/Gln) amidotransferase subunit B from Mycobacterium leprae (strain Br4923).